The chain runs to 143 residues: MDIQTILEKTLPGLGYELVDFELTAQGTLRVFIDKEGGITVEDCATVSNHLSRVFMVEDIDYKNLEISSPGLDRPLKKAADFVRFAGQNAKIKTRLPIDGQKNFIGKIEGCENDTVTVSFDGKTVQIELGNIDKARLRPEFKF.

The protein belongs to the RimP family.

The protein localises to the cytoplasm. Functionally, required for maturation of 30S ribosomal subunits. The protein is Ribosome maturation factor RimP of Neisseria meningitidis serogroup C / serotype 2a (strain ATCC 700532 / DSM 15464 / FAM18).